Reading from the N-terminus, the 369-residue chain is S-(hydroxymethyl)glutathione dehydrogenase (369 aa).

Cys-40, His-62, Cys-92, Cys-95, Cys-98, Cys-106, and Cys-169 together coordinate Zn(2+).

This sequence belongs to the zinc-containing alcohol dehydrogenase family. Class-III subfamily. In terms of assembly, homodimer. Zn(2+) serves as cofactor.

Its subcellular location is the cytoplasm. The catalysed reaction is S-(hydroxymethyl)glutathione + NADP(+) = S-formylglutathione + NADPH + H(+). The enzyme catalyses S-(hydroxymethyl)glutathione + NAD(+) = S-formylglutathione + NADH + H(+). It catalyses the reaction a primary alcohol + NAD(+) = an aldehyde + NADH + H(+). It carries out the reaction a secondary alcohol + NAD(+) = a ketone + NADH + H(+). The catalysed reaction is S-nitrosoglutathione + NADH + H(+) = S-(hydroxysulfenamide)glutathione + NAD(+). Functionally, has high formaldehyde dehydrogenase activity in the presence of glutathione and catalyzes the oxidation of normal alcohols in a reaction that is not GSH-dependent. In addition, hemithiolacetals other than those formed from GSH, including omega-thiol fatty acids, also are substrates. Also acts as a S-nitroso-glutathione reductase by catalyzing the NADH-dependent reduction of S-nitrosoglutathione. This chain is S-(hydroxymethyl)glutathione dehydrogenase (frmA), found in Synechocystis sp. (strain ATCC 27184 / PCC 6803 / Kazusa).